The chain runs to 154 residues: SsrA-binding protein (154 aa).

The protein belongs to the SmpB family.

It is found in the cytoplasm. Functionally, required for rescue of stalled ribosomes mediated by trans-translation. Binds to transfer-messenger RNA (tmRNA), required for stable association of tmRNA with ribosomes. tmRNA and SmpB together mimic tRNA shape, replacing the anticodon stem-loop with SmpB. tmRNA is encoded by the ssrA gene; the 2 termini fold to resemble tRNA(Ala) and it encodes a 'tag peptide', a short internal open reading frame. During trans-translation Ala-aminoacylated tmRNA acts like a tRNA, entering the A-site of stalled ribosomes, displacing the stalled mRNA. The ribosome then switches to translate the ORF on the tmRNA; the nascent peptide is terminated with the 'tag peptide' encoded by the tmRNA and targeted for degradation. The ribosome is freed to recommence translation, which seems to be the essential function of trans-translation. This is SsrA-binding protein from Staphylococcus saprophyticus subsp. saprophyticus (strain ATCC 15305 / DSM 20229 / NCIMB 8711 / NCTC 7292 / S-41).